An 85-amino-acid chain; its full sequence is RNA-binding protein Hfq (85 aa).

The 60-residue stretch at 9 to 68 (DPFLNALRRERIPVSIYLVNGIKLQGQIESFDQFVILLKNTVNQMVYKHAISTVVPARPV) folds into the Sm domain. Positions 66 to 85 (RPVNHHHASDRPATLEKTEE) are disordered. Residues 72–85 (HASDRPATLEKTEE) are compositionally biased toward basic and acidic residues.

This sequence belongs to the Hfq family. In terms of assembly, homohexamer.

Its function is as follows. RNA chaperone that binds small regulatory RNA (sRNAs) and mRNAs to facilitate mRNA translational regulation in response to envelope stress, environmental stress and changes in metabolite concentrations. Also binds with high specificity to tRNAs. This is RNA-binding protein Hfq from Photobacterium profundum (strain SS9).